The following is a 286-amino-acid chain: Undecaprenyl-diphosphatase (286 aa).

7 consecutive transmembrane segments (helical) span residues Trp5–Val25, Ile55–Trp75, Ser92–Leu112, Leu122–Ala142, Ile185–Leu205, Met229–Val249, and Phe264–Ile284.

This sequence belongs to the UppP family.

It localises to the cell membrane. It catalyses the reaction di-trans,octa-cis-undecaprenyl diphosphate + H2O = di-trans,octa-cis-undecaprenyl phosphate + phosphate + H(+). Catalyzes the dephosphorylation of undecaprenyl diphosphate (UPP). Confers resistance to bacitracin. The polypeptide is Undecaprenyl-diphosphatase (Clostridium novyi (strain NT)).